The primary structure comprises 217 residues: Octanoyltransferase (217 aa).

The BPL/LPL catalytic domain maps to 33–208 (SSSQDEIWLV…KLCSLLGIAS (176 aa)). Residues 72–79 (RGGQVTYH), 139–141 (SIG), and 152–154 (GLA) contribute to the substrate site. Cysteine 170 (acyl-thioester intermediate) is an active-site residue.

Belongs to the LipB family.

It is found in the cytoplasm. The enzyme catalyses octanoyl-[ACP] + L-lysyl-[protein] = N(6)-octanoyl-L-lysyl-[protein] + holo-[ACP] + H(+). It participates in protein modification; protein lipoylation via endogenous pathway; protein N(6)-(lipoyl)lysine from octanoyl-[acyl-carrier-protein]: step 1/2. Its function is as follows. Catalyzes the transfer of endogenously produced octanoic acid from octanoyl-acyl-carrier-protein onto the lipoyl domains of lipoate-dependent enzymes. Lipoyl-ACP can also act as a substrate although octanoyl-ACP is likely to be the physiological substrate. In Pseudoalteromonas atlantica (strain T6c / ATCC BAA-1087), this protein is Octanoyltransferase.